Here is a 443-residue protein sequence, read N- to C-terminus: Tubulin beta chain (443 aa).

Glutamine 11, glutamate 69, serine 138, glycine 142, threonine 143, glycine 144, asparagine 204, and asparagine 226 together coordinate GTP. Glutamate 69 provides a ligand contact to Mg(2+). The interval 424–443 (QYQDATAEEEGEFEEEEGEN) is disordered. A compositionally biased stretch (acidic residues) spans 429–443 (TAEEEGEFEEEEGEN).

Belongs to the tubulin family. As to quaternary structure, dimer of alpha and beta chains. A typical microtubule is a hollow water-filled tube with an outer diameter of 25 nm and an inner diameter of 15 nM. Alpha-beta heterodimers associate head-to-tail to form protofilaments running lengthwise along the microtubule wall with the beta-tubulin subunit facing the microtubule plus end conferring a structural polarity. Microtubules usually have 13 protofilaments but different protofilament numbers can be found in some organisms and specialized cells. Mg(2+) is required as a cofactor.

Its subcellular location is the cytoplasm. It is found in the cytoskeleton. Tubulin is the major constituent of microtubules, a cylinder consisting of laterally associated linear protofilaments composed of alpha- and beta-tubulin heterodimers. Microtubules grow by the addition of GTP-tubulin dimers to the microtubule end, where a stabilizing cap forms. Below the cap, tubulin dimers are in GDP-bound state, owing to GTPase activity of alpha-tubulin. The polypeptide is Tubulin beta chain (BETA-TT1) (Tetrahymena pyriformis).